The primary structure comprises 732 residues: Catalase-peroxidase (732 aa).

Residues 1 to 26 are disordered; it reads MDAKTDDQGGKCPFPHGGGSRGHRNR. Positions 97–219 form a cross-link, tryptophyl-tyrosyl-methioninium (Trp-Tyr) (with M-245); it reads WHSAGTYRTT…LGAVQMGLIY (123 aa). Residue H98 is the Proton acceptor of the active site. The tryptophyl-tyrosyl-methioninium (Tyr-Met) (with W-97) cross-link spans 219–245; that stretch reads YVNPEGPNGNPDPVAAAKDIRETFARM. Residue H260 coordinates heme b.

The protein belongs to the peroxidase family. Peroxidase/catalase subfamily. As to quaternary structure, homodimer or homotetramer. Heme b serves as cofactor. Post-translationally, formation of the three residue Trp-Tyr-Met cross-link is important for the catalase, but not the peroxidase activity of the enzyme.

The catalysed reaction is H2O2 + AH2 = A + 2 H2O. It catalyses the reaction 2 H2O2 = O2 + 2 H2O. Its function is as follows. Bifunctional enzyme with both catalase and broad-spectrum peroxidase activity. This chain is Catalase-peroxidase, found in Rhodopseudomonas palustris (strain BisB5).